A 610-amino-acid polypeptide reads, in one-letter code: MSKIIGIDLGTTNSCVTVLEGDEPKVIQNPEGSRTTPSVVAFKNGETQVGEVAKRQAITNPNTVQSIKRHMGTDYKVDIEGKSYTPQEISAMILQNLKNTAESYLGEKVDKAVITVPAYFNDAERQATKDAGKIAGLEVERIINEPTAAALAYGLDKTDKDEKVLVFDLGGGTFDVSILELGDGVFEVLSTAGDNKLGGDDFDQVIIDYLVAEFKKENGVDLSQDKMALQRLKDAAEKAKKDLSGVSQTQISLPFISAGENGPLHLEVNLTRSKFEELSDSLIRRTMGPTRQAMKDAGLTNSDIDEVILVGGSTRIPAVQEAVKKEIGKETNKGVNPDEVVAMGAAIQGGVITGDVKDVVLLDVTPLSLGIEILGGRMNTLIERNTTIPTSKSQIYSTAVDNQPSVDVHVLQGERPMAADNKTLGRFQLTDIPPAERGKPQIEVTFDIDKNGIVNVTAKDLGTNKEQRITIQSSSSLSDEEIDRMVKDAEVNAEADKKRREEVDLRNEADSLVFQVEKTLTDLGENIGEEDKKSAEEKKDALKTALEGQDIEDIKSKKEELEKVIQELSAKVYEQVAQQQQQAQGANAGQNNDSTVEDAEFKEVKDDDKK.

The residue at position 173 (threonine 173) is a Phosphothreonine; by autocatalysis. Positions 579 to 592 (QQQQAQGANAGQNN) are enriched in low complexity. A disordered region spans residues 579-610 (QQQQAQGANAGQNNDSTVEDAEFKEVKDDDKK). The segment covering 599–610 (AEFKEVKDDDKK) has biased composition (basic and acidic residues).

It belongs to the heat shock protein 70 family.

Functionally, acts as a chaperone. The polypeptide is Chaperone protein DnaK (Staphylococcus aureus (strain bovine RF122 / ET3-1)).